The sequence spans 141 residues: Nucleoside diphosphate kinase (141 aa).

ATP-binding residues include K11, F59, R87, T93, R104, and N114. H117 serves as the catalytic Pros-phosphohistidine intermediate.

The protein belongs to the NDK family. Homotetramer. The cofactor is Mg(2+).

The protein resides in the cytoplasm. The enzyme catalyses a 2'-deoxyribonucleoside 5'-diphosphate + ATP = a 2'-deoxyribonucleoside 5'-triphosphate + ADP. The catalysed reaction is a ribonucleoside 5'-diphosphate + ATP = a ribonucleoside 5'-triphosphate + ADP. Major role in the synthesis of nucleoside triphosphates other than ATP. The ATP gamma phosphate is transferred to the NDP beta phosphate via a ping-pong mechanism, using a phosphorylated active-site intermediate. This Polaromonas sp. (strain JS666 / ATCC BAA-500) protein is Nucleoside diphosphate kinase.